A 625-amino-acid chain; its full sequence is Endoglucanase 13 (625 aa).

The N-terminal stretch at 1–34 (MAATMNKTPATTFLLIPAAASLVLLLAAAASVEA) is a signal peptide. Residue Asp91 is the Nucleophile of the active site. The active site involves His427. A glycan (N-linked (GlcNAc...) asparagine) is linked at Asn440. Residues Asp479 and Glu488 contribute to the active site. The tract at residues 509-530 (ADNTPEYTPAPNAPSPSNGGSP) is disordered.

This sequence belongs to the glycosyl hydrolase 9 (cellulase E) family.

The protein localises to the secreted. The catalysed reaction is Endohydrolysis of (1-&gt;4)-beta-D-glucosidic linkages in cellulose, lichenin and cereal beta-D-glucans.. The polypeptide is Endoglucanase 13 (GLU6) (Oryza sativa subsp. indica (Rice)).